Here is a 109-residue protein sequence, read N- to C-terminus: uncharacterized protein (109 aa).

The helical transmembrane segment at 82-102 threads the bilayer; sequence SLSFLLLLFFYFNNYYFLSMT.

It is found in the membrane. This is an uncharacterized protein from Saccharomyces cerevisiae (strain ATCC 204508 / S288c) (Baker's yeast).